A 257-amino-acid polypeptide reads, in one-letter code: Ribonuclease HIII (257 aa).

Positions 71 to 257 (KKLPGCDESG…ERFIKLNFNV (187 aa)) constitute an RNase H type-2 domain. 3 residues coordinate a divalent metal cation: D77, E78, and D179.

Belongs to the RNase HII family. RnhC subfamily. The cofactor is Mn(2+). It depends on Mg(2+) as a cofactor.

It is found in the cytoplasm. The catalysed reaction is Endonucleolytic cleavage to 5'-phosphomonoester.. Its function is as follows. Endonuclease that specifically degrades the RNA of RNA-DNA hybrids. The sequence is that of Ribonuclease HIII (rnhC) from Aquifex aeolicus (strain VF5).